A 238-amino-acid chain; its full sequence is 1-(5-phosphoribosyl)-5-[(5-phosphoribosylamino)methylideneamino] imidazole-4-carboxamide isomerase (238 aa).

The active-site Proton acceptor is Asp8. Residue Asp129 is the Proton donor of the active site.

Belongs to the HisA/HisF family.

Its subcellular location is the cytoplasm. The enzyme catalyses 1-(5-phospho-beta-D-ribosyl)-5-[(5-phospho-beta-D-ribosylamino)methylideneamino]imidazole-4-carboxamide = 5-[(5-phospho-1-deoxy-D-ribulos-1-ylimino)methylamino]-1-(5-phospho-beta-D-ribosyl)imidazole-4-carboxamide. It functions in the pathway amino-acid biosynthesis; L-histidine biosynthesis; L-histidine from 5-phospho-alpha-D-ribose 1-diphosphate: step 4/9. The sequence is that of 1-(5-phosphoribosyl)-5-[(5-phosphoribosylamino)methylideneamino] imidazole-4-carboxamide isomerase from Lacticaseibacillus paracasei (strain ATCC 334 / BCRC 17002 / CCUG 31169 / CIP 107868 / KCTC 3260 / NRRL B-441) (Lactobacillus paracasei).